The primary structure comprises 206 residues: Small ribosomal subunit protein uS4 (206 aa).

The S4 RNA-binding domain maps to 96-156; it reads NRLDNVTYRI…KNSKLQSRIK (61 aa).

Belongs to the universal ribosomal protein uS4 family. In terms of assembly, part of the 30S ribosomal subunit. Contacts protein S5. The interaction surface between S4 and S5 is involved in control of translational fidelity.

Functionally, one of the primary rRNA binding proteins, it binds directly to 16S rRNA where it nucleates assembly of the body of the 30S subunit. With S5 and S12 plays an important role in translational accuracy. The protein is Small ribosomal subunit protein uS4 of Buchnera aphidicola subsp. Baizongia pistaciae (strain Bp).